Consider the following 261-residue polypeptide: Undecaprenyl-diphosphatase 2 (261 aa).

The next 8 membrane-spanning stretches (helical) occupy residues 1-21 (MLEALLLGVVEGLTEFLPISS), 38-58 (PGKTYEIVVQLGAILAVCVVF), 75-95 (FAFARNVMVAFLPAAVIGATL), 103-123 (LESPLVAAIALVVGGVAILVI), 138-158 (MSPALALGVGFCQVLAMVPGV), 178-198 (AAEFSFFLAIPTMCGASAYSL), 212-232 (LIALGFVAAFLSALVVVKGFI), and 240-260 (FAPFAWYRIAFGSLMAVLILM).

It belongs to the UppP family.

The protein resides in the cell inner membrane. The catalysed reaction is di-trans,octa-cis-undecaprenyl diphosphate + H2O = di-trans,octa-cis-undecaprenyl phosphate + phosphate + H(+). Its function is as follows. Catalyzes the dephosphorylation of undecaprenyl diphosphate (UPP). Confers resistance to bacitracin. The chain is Undecaprenyl-diphosphatase 2 from Paramagnetospirillum magneticum (strain ATCC 700264 / AMB-1) (Magnetospirillum magneticum).